The sequence spans 213 residues: Uracil phosphoribosyltransferase (213 aa).

5-phospho-alpha-D-ribose 1-diphosphate-binding positions include Arg78, Arg103, and 130-138 (DPMLATGGT). Uracil contacts are provided by residues Ile197 and 202 to 204 (GDA). Residue Asp203 coordinates 5-phospho-alpha-D-ribose 1-diphosphate.

The protein belongs to the UPRTase family. Mg(2+) serves as cofactor.

The enzyme catalyses UMP + diphosphate = 5-phospho-alpha-D-ribose 1-diphosphate + uracil. It participates in pyrimidine metabolism; UMP biosynthesis via salvage pathway; UMP from uracil: step 1/1. Its activity is regulated as follows. Allosterically activated by GTP. In terms of biological role, catalyzes the conversion of uracil and 5-phospho-alpha-D-ribose 1-diphosphate (PRPP) to UMP and diphosphate. This chain is Uracil phosphoribosyltransferase, found in Nocardioides sp. (strain ATCC BAA-499 / JS614).